Consider the following 530-residue polypeptide: Ubiquitin carboxyl-terminal hydrolase 17-like protein 5 (530 aa).

Residues 80-375 (AGLQNMGNTC…QAYVLFYIQK (296 aa)) form the USP domain. The active-site Nucleophile is C89. Residue H334 is the Proton acceptor of the active site. Basic and acidic residues-rich tracts occupy residues 382-392 (SESVSRGREPR) and 398-412 (DTDRRATQGELKRDH). Disordered stretches follow at residues 382-412 (SESVSRGREPRALGAEDTDRRATQGELKRDH) and 477-530 (NHHP…LVCQ). Residues 493–505 (TPTHQESMNTGTL) are compositionally biased toward polar residues. Residues 510–524 (GRARRSKGKNKHSKR) are compositionally biased toward basic residues.

The protein belongs to the peptidase C19 family. USP17 subfamily.

The protein localises to the nucleus. Its subcellular location is the endoplasmic reticulum. It carries out the reaction Thiol-dependent hydrolysis of ester, thioester, amide, peptide and isopeptide bonds formed by the C-terminal Gly of ubiquitin (a 76-residue protein attached to proteins as an intracellular targeting signal).. Its function is as follows. Deubiquitinating enzyme that removes conjugated ubiquitin from specific proteins to regulate different cellular processes that may include cell proliferation, progression through the cell cycle, apoptosis, cell migration, and the cellular response to viral infection. The protein is Ubiquitin carboxyl-terminal hydrolase 17-like protein 5 (USP17L5) of Homo sapiens (Human).